A 1299-amino-acid chain; its full sequence is Protein prickle (1299 aa).

The span at Met-1–Gly-19 shows a compositional bias: gly residues. Disordered regions lie at residues Met-1–Ala-24, Ala-115–Gln-181, Glu-241–Pro-289, Leu-368–Ser-396, and Leu-425–Ser-527. The span at Ser-145–His-159 shows a compositional bias: basic residues. The span at Asn-168–Gln-181 shows a compositional bias: polar residues. Positions Pro-263–Ala-272 are enriched in pro residues. The segment covering Leu-425–Gly-434 has biased composition (low complexity). A compositionally biased stretch (gly residues) spans Ala-435–Ala-445. Residues Pro-457–Gln-469 show a composition bias toward polar residues. The PET domain occupies Met-515 to Pro-623. Positions Asp-516–Asp-525 are enriched in basic and acidic residues. LIM zinc-binding domains are found at residues Arg-622 to Lys-686, Pro-687 to Glu-747, and Tyr-748 to Pro-810. Disordered stretches follow at residues Gly-807–Thr-865, Lys-902–Gln-940, and Ala-1026–Ser-1249. Residues Pro-844–Ala-864 are compositionally biased toward low complexity. Polar residues-rich tracts occupy residues Arg-922 to Asn-934 and Ser-1070 to Ser-1081. Low complexity predominate over residues Ser-1089–Ser-1101. Over residues Gly-1136–Gly-1150 the composition is skewed to basic and acidic residues. Residues Arg-1151–Ser-1183 are compositionally biased toward basic residues. Basic and acidic residues predominate over residues Ser-1216–Glu-1231. Positions Val-1238–Ser-1249 are enriched in low complexity.

It belongs to the prickle / espinas / testin family. As to quaternary structure, interacts with dsh; PET and LIM domains interact with dsh DEP domain, in wing cells. Interacts with Vang in photoreceptor cells. In terms of tissue distribution, expressed in the wing, leg and eye imaginal disks. Expressed within the photoreceptors of the eye.

The protein localises to the cell membrane. Acts in a planar cell polarity (PCP) complex; polarization along the apical/basal axis of epithelial cells. Correct expression of the alternative isoforms is required for PCP signaling in imaginal disks. PCP signaling in the wing disk requires the receptor fz and the cytoplasmic proteins dsh and pk. These act in a feedback loop leading to activation of the jnk cascade and subsequent polarized arrangement of hairs and bristles. Dgo and pk compete with one another for dsh binding, thereby modulating fz dsh activity and ensuring tight control over fz PCP signaling. Vang, stan and pk function together to regulate the establishment of tissue polarity in the adult eye. The protein is Protein prickle of Drosophila melanogaster (Fruit fly).